The following is a 469-amino-acid chain: UDP-N-acetylmuramate--L-alanine ligase (469 aa).

Residue 113–119 (GSHGKTT) coordinates ATP.

The protein belongs to the MurCDEF family.

It is found in the cytoplasm. The enzyme catalyses UDP-N-acetyl-alpha-D-muramate + L-alanine + ATP = UDP-N-acetyl-alpha-D-muramoyl-L-alanine + ADP + phosphate + H(+). It participates in cell wall biogenesis; peptidoglycan biosynthesis. Its function is as follows. Cell wall formation. The protein is UDP-N-acetylmuramate--L-alanine ligase of Sorangium cellulosum (strain So ce56) (Polyangium cellulosum (strain So ce56)).